A 199-amino-acid chain; its full sequence is Protein GrpE (199 aa).

The interval 1-40 is disordered; that stretch reads MEKKKHGTNSISEALKVKAAVEQETATPEPTPQSETESAD. The span at 24–36 shows a compositional bias: polar residues; sequence ETATPEPTPQSET.

Belongs to the GrpE family. In terms of assembly, homodimer.

It is found in the cytoplasm. Participates actively in the response to hyperosmotic and heat shock by preventing the aggregation of stress-denatured proteins, in association with DnaK and GrpE. It is the nucleotide exchange factor for DnaK and may function as a thermosensor. Unfolded proteins bind initially to DnaJ; upon interaction with the DnaJ-bound protein, DnaK hydrolyzes its bound ATP, resulting in the formation of a stable complex. GrpE releases ADP from DnaK; ATP binding to DnaK triggers the release of the substrate protein, thus completing the reaction cycle. Several rounds of ATP-dependent interactions between DnaJ, DnaK and GrpE are required for fully efficient folding. The protein is Protein GrpE of Geotalea uraniireducens (strain Rf4) (Geobacter uraniireducens).